Consider the following 154-residue polypeptide: Superoxide dismutase [Cu-Zn] (154 aa).

Residues His-47, His-49, and His-64 each coordinate Cu cation. A disulfide bridge links Cys-58 with Cys-147. His-64, His-72, His-81, and Asp-84 together coordinate Zn(2+). His-121 is a binding site for Cu cation. A compositionally biased stretch (basic and acidic residues) spans 125-137 (DDLGRGGNEESKK). The disordered stretch occupies residues 125 to 147 (DDLGRGGNEESKKTGNAGPRPAC). Residue Arg-144 participates in substrate binding.

In terms of assembly, homodimer. Cu cation is required as a cofactor. It depends on Zn(2+) as a cofactor.

It is found in the cytoplasm. The catalysed reaction is 2 superoxide + 2 H(+) = H2O2 + O2. Its function is as follows. Destroys radicals which are normally produced within the cells and which are toxic to biological systems. This chain is Superoxide dismutase [Cu-Zn], found in Aspergillus niger.